A 967-amino-acid polypeptide reads, in one-letter code: Vacuolar membrane protease (967 aa).

The Cytoplasmic segment spans residues 1–16; it reads MARPSLSRSNPLGFTP. The chain crosses the membrane as a helical span at residues 17-37; that stretch reads WPVTVITAVVYLALVVPLLVV. Residues 38 to 387 are Vacuolar-facing; that stretch reads HHVVPSAPSS…SAFVVFELHT (350 aa). 2 N-linked (GlcNAc...) asparagine glycosylation sites follow: Asn-53 and Asn-119. The Zn(2+) site is built by His-171 and Asp-183. The active-site Proton acceptor is the Glu-217. Residues Glu-218, Glu-243, and His-316 each contribute to the Zn(2+) site. Residues 388–408 form a helical membrane-spanning segment; it reads LFALSVTLLVVAPLVLLVTSI. Residues 409 to 441 are Cytoplasmic-facing; sequence ALNRADKMYLFRASASPEDSDGSEAVLLHGVRG. A helical membrane pass occupies residues 442-462; it reads FFRFPFLLVIPTAVTVGLAYL. The Vacuolar segment spans residues 463 to 472; sequence VTKFNPYIIH. The helical transmembrane segment at 473-493 threads the bilayer; it reads SSEYAVWSMMISAWVFLAWFV. Over 494 to 507 the chain is Cytoplasmic; sequence SRVADFARPSAFHR. Residues 508–528 form a helical membrane-spanning segment; the sequence is VYTLTWLFLVEWVLLVISTVY. At 529–532 the chain is on the vacuolar side; sequence ENKY. Residues 533 to 553 traverse the membrane as a helical segment; it reads GLAGGYFVFFAFAGTFLATWI. Topologically, residues 554-663 are cytoplasmic; the sequence is SYLELFALPR…WSIHLPKWVW (110 aa). The disordered stretch occupies residues 579–612; the sequence is SSHGSRLGTASGEDVEDGEDEDEDDDGTTAEATE. The span at 591 to 606 shows a compositional bias: acidic residues; the sequence is EDVEDGEDEDEDDDGT. The helical transmembrane segment at 664–684 threads the bilayer; it reads VLQFLLTAPLVLTFVGPLALL. Residues 685 to 700 lie on the Vacuolar side of the membrane; it reads LTSALRQTGQDGSSSL. Residues 701 to 721 form a helical membrane-spanning segment; the sequence is FIYIAVAALTTLLFIPLLPFI. Topologically, residues 722–727 are cytoplasmic; that stretch reads HRYTHH. Residues 728–748 form a helical membrane-spanning segment; the sequence is IPLFLLCVFAGTLIYNLVAFP. Over 749 to 967 the chain is Vacuolar; it reads FSPANRLKLF…LVEGSRRFEI (219 aa). N-linked (GlcNAc...) asparagine glycosylation is found at Asn-795 and Asn-832.

The protein belongs to the peptidase M28 family. It depends on Zn(2+) as a cofactor.

It is found in the vacuole membrane. In terms of biological role, may be involved in vacuolar sorting and osmoregulation. In Neosartorya fischeri (strain ATCC 1020 / DSM 3700 / CBS 544.65 / FGSC A1164 / JCM 1740 / NRRL 181 / WB 181) (Aspergillus fischerianus), this protein is Vacuolar membrane protease.